We begin with the raw amino-acid sequence, 461 residues long: General transcription and DNA repair factor IIH subunit SSL1 (461 aa).

The interval methionine 1–serine 70 is disordered. Residues valine 26–aspartate 37 are compositionally biased toward basic and acidic residues. The segment covering histidine 53–serine 63 has biased composition (basic residues). In terms of domain architecture, VWFA spans serine 125–alanine 304. The C4-type zinc finger occupies cysteine 349–cysteine 366.

It belongs to the GTF2H2 family. Component of the 7-subunit TFIIH core complex composed of XPB/SSL2, XPD/RAD3, SSL1, TFB1, TFB2, TFB4 and TFB5, which is active in NER. The core complex associates with the 3-subunit CTD-kinase module TFIIK composed of CCL1, KIN28 and TFB3 to form the 10-subunit holoenzyme (holo-TFIIH) active in transcription. An additionnal subunit, TFB6, plays a role in the dissociation of the SSL2 helicase from TFIIH after transcription initiation.

The protein localises to the nucleus. Its function is as follows. Component of the general transcription and DNA repair factor IIH (TFIIH) core complex, which is involved in general and transcription-coupled nucleotide excision repair (NER) of damaged DNA and, when complexed to TFIIK, in RNA transcription by RNA polymerase II. In NER, TFIIH acts by opening DNA around the lesion to allow the excision of the damaged oligonucleotide and its replacement by a new DNA fragment. In transcription, TFIIH has an essential role in transcription initiation. When the pre-initiation complex (PIC) has been established, TFIIH is required for promoter opening and promoter escape. Phosphorylation of the C-terminal tail (CTD) of the largest subunit of RNA polymerase II by the kinase module TFIIK controls the initiation of transcription. The chain is General transcription and DNA repair factor IIH subunit SSL1 (SSL1) from Saccharomyces cerevisiae (strain ATCC 204508 / S288c) (Baker's yeast).